We begin with the raw amino-acid sequence, 396 residues long: MVVRHSSDKGKIGVGVPLEPFLHQVGGHLSVLQYDAYTVCKPLVSQEQKFYESLPLAMKCFTPKYKGTITVRLRRDSRGHLGLVANPLKENLEPFQVSPESRAVALWQTLQQTTGSESSPCPLTQLARSLKESAAKVLLRSDCHLSTQASPLVESEDGSQVERKGFNPWGLHCHQAHLTRLCSQYPEDKRHRFLLLENVVSQYKQPCILDLKMGTRQHGDDASEEKKARHMKKCAQSTSACLGVRICGMQVYQTDQKSFLCKDKYYGRKLSVEGFRQALSQFLHDGTRLRAELLEPILRRLQALLTVIRSQSSYRFYSSSVLIIYDGEPPQTTQGSTSGGVTSGDPAKVDVRMIDFAHTTFKGSWNEHTTYEGPDPGYIFGLENLIGILRDIQEGE.

Residue 206–214 (PCILDLKMG) coordinates substrate.

It belongs to the inositol phosphokinase (IPK) family. Highly expressed in cerebellum, brain cortex, kidney, thymus and lung. Detected at lower levels in hippocampus, testis, heart and olfactory bulb.

It is found in the cytoplasm. It carries out the reaction 1D-myo-inositol hexakisphosphate + ATP = 5-diphospho-1D-myo-inositol 1,2,3,4,6-pentakisphosphate + ADP. The enzyme catalyses 1-diphospho-1D-myo-inositol 2,3,4,5,6-pentakisphosphate + ATP + H(+) = 1,5-bis(diphospho)-1D-myo-inositol 2,3,4,6-tetrakisphosphate + ADP. In terms of biological role, converts inositol hexakisphosphate (InsP6) to diphosphoinositol pentakisphosphate (InsP7/PP-InsP5). Converts 1,3,4,5,6-pentakisphosphate (InsP5) to PP-InsP4. The protein is Inositol hexakisphosphate kinase 3 (Ip6k3) of Mus musculus (Mouse).